Consider the following 118-residue polypeptide: UPF0102 protein CMM_1377 (118 aa).

This sequence belongs to the UPF0102 family.

In Clavibacter michiganensis subsp. michiganensis (strain NCPPB 382), this protein is UPF0102 protein CMM_1377.